The sequence spans 367 residues: DNA replication and repair protein RecF (367 aa).

30-37 (GANGSGKT) lines the ATP pocket.

This sequence belongs to the RecF family.

It is found in the cytoplasm. In terms of biological role, the RecF protein is involved in DNA metabolism; it is required for DNA replication and normal SOS inducibility. RecF binds preferentially to single-stranded, linear DNA. It also seems to bind ATP. The polypeptide is DNA replication and repair protein RecF (Pseudomonas fluorescens (strain ATCC BAA-477 / NRRL B-23932 / Pf-5)).